The following is a 121-amino-acid chain: Small ribosomal subunit protein uS13 (121 aa).

The segment at 97–121 (PVRGQKTHSNARTRKGPRASRIKKK) is disordered. Basic residues predominate over residues 101 to 121 (QKTHSNARTRKGPRASRIKKK).

The protein belongs to the universal ribosomal protein uS13 family. Part of the 30S ribosomal subunit. Forms a loose heterodimer with protein S19. Forms two bridges to the 50S subunit in the 70S ribosome.

Located at the top of the head of the 30S subunit, it contacts several helices of the 16S rRNA. In the 70S ribosome it contacts the 23S rRNA (bridge B1a) and protein L5 of the 50S subunit (bridge B1b), connecting the 2 subunits; these bridges are implicated in subunit movement. Contacts the tRNAs in the A and P-sites. The sequence is that of Small ribosomal subunit protein uS13 from Kosmotoga olearia (strain ATCC BAA-1733 / DSM 21960 / TBF 19.5.1).